The following is an 862-amino-acid chain: Probable glutaminase ARB_05535/05536 (862 aa).

The N-terminal stretch at Met1–Ala19 is a signal peptide. 7 N-linked (GlcNAc...) asparagine glycosylation sites follow: Asn106, Asn273, Asn436, Asn448, Asn486, Asn610, and Asn744. The tract at residues Phe798 to Asp862 is disordered. Polar residues predominate over residues Ser853–Asp862.

The protein belongs to the fungal glutaminase gtaA family.

It localises to the secreted. It catalyses the reaction L-glutamine + H2O = L-glutamate + NH4(+). Its function is as follows. Glutaminase catalyzes the hydrolysis of glutamine to glutamic acid and plays a key role in nitrogen metabolism. The polypeptide is Probable glutaminase ARB_05535/05536 (Arthroderma benhamiae (strain ATCC MYA-4681 / CBS 112371) (Trichophyton mentagrophytes)).